The chain runs to 365 residues: Pituitary-specific positive transcription factor 1 (365 aa).

The short motif at 5–12 (AFSADSFT) is the 9aaTAD element. Positions 160–191 (PAVLSEEPPLGGTKDLRLRSRPPDDPPDMDSP) are disordered. The span at 173 to 183 (KDLRLRSRPPD) shows a compositional bias: basic and acidic residues. The region spanning 188–262 (MDSPQIRELE…ILAKWLDEAE (75 aa)) is the POU-specific domain. The homeobox DNA-binding region spans 278–337 (KRKRRTTISLGAKEALERSFREKIKPSSQEIVRMAEGLHLEKEVVRVWFCNRRQREKRVK).

The protein belongs to the POU transcription factor family. Class-1 subfamily.

Its subcellular location is the nucleus. Transcription factor that activates growth hormone and prolactin genes. Specifically binds to the consensus sequence 5'-TAAAT-3'. The sequence is that of Pituitary-specific positive transcription factor 1 (pou1f1) from Oncorhynchus keta (Chum salmon).